The chain runs to 528 residues: Peptide chain release factor 3 (528 aa).

The tr-type G domain occupies 11-279 (NKRRTFAIIS…GIVEWAPKPL (269 aa)). Residues 20 to 27 (SHPDAGKT), 88 to 92 (DTPGH), and 142 to 145 (NKLD) each bind GTP.

This sequence belongs to the TRAFAC class translation factor GTPase superfamily. Classic translation factor GTPase family. PrfC subfamily.

Its subcellular location is the cytoplasm. Its function is as follows. Increases the formation of ribosomal termination complexes and stimulates activities of RF-1 and RF-2. It binds guanine nucleotides and has strong preference for UGA stop codons. It may interact directly with the ribosome. The stimulation of RF-1 and RF-2 is significantly reduced by GTP and GDP, but not by GMP. The polypeptide is Peptide chain release factor 3 (Shewanella sp. (strain W3-18-1)).